We begin with the raw amino-acid sequence, 368 residues long: MYKILLADDERIILDGMAGIIEWESLGASLIGKAQNGHEAYEKIVHKQPHIVITDVKMPGMDGLELIKKVSAVSPSVQFIVLSGFGEFEYAKEAMKYGVKHYLLKPCNEQQIISSLEEIIAELKRQDVHKKKTAHLKHELDHIRSFAADQYLEGLIAGVAQLSPPPSLAGKKIRLLILKGEQSIDAAAREALGSALTAVCSSGEWTVLAVEENAAEKVAEVFADRKMAISQAGELRHAGQLFRDTAEASGDLHGSAVISKMIRLIADELGNPNLSLKWAAKDMLFMNPDYLGKLFKQETGEKFSQYVTRVRLEHAMKQMKIRRDVSVSEIAEEIGFGDNPKYFSLVFKKYTGLTPSEFRRKQGGASAG.

Residues 3-120 (KILLADDERI…QIISSLEEII (118 aa)) enclose the Response regulatory domain. A 4-aspartylphosphate modification is found at Asp55. Residues 259–361 (SKMIRLIADE…GLTPSEFRRK (103 aa)) form the HTH araC/xylS-type domain. 2 DNA-binding regions (H-T-H motif) span residues 278-299 (WAAKDMLFMNPDYLGKLFKQET) and 327-351 (VSEIAEEIGFGDNPKYFSLVFKKYT).

In terms of processing, phosphorylated by YesM.

The protein localises to the cytoplasm. Its function is as follows. Member of the two-component regulatory system YesM/YesN. This is an uncharacterized protein from Bacillus subtilis (strain 168).